A 143-amino-acid polypeptide reads, in one-letter code: Large-conductance mechanosensitive channel (143 aa).

3 helical membrane passes run phenylalanine 10–glycine 30, isoleucine 40–isoleucine 60, and glycine 86–valine 106.

The protein belongs to the MscL family. Homopentamer.

The protein localises to the cell inner membrane. Its function is as follows. Channel that opens in response to stretch forces in the membrane lipid bilayer. May participate in the regulation of osmotic pressure changes within the cell. The sequence is that of Large-conductance mechanosensitive channel from Acinetobacter baumannii (strain ATCC 17978 / DSM 105126 / CIP 53.77 / LMG 1025 / NCDC KC755 / 5377).